Here is a 384-residue protein sequence, read N- to C-terminus: S-adenosylmethionine synthase (384 aa).

His15 is a binding site for ATP. Asp17 contributes to the Mg(2+) binding site. Residue Glu43 coordinates K(+). Positions 56 and 99 each coordinate L-methionine. The tract at residues 99 to 109 (QSSDINQGVDR) is flexible loop. ATP-binding positions include 164-166 (DAK), 230-231 (RF), Asp239, 245-246 (RK), Ala262, and Lys266. Asp239 provides a ligand contact to L-methionine. Residue Lys270 coordinates L-methionine.

The protein belongs to the AdoMet synthase family. As to quaternary structure, homotetramer; dimer of dimers. Requires Mg(2+) as cofactor. K(+) serves as cofactor.

The protein resides in the cytoplasm. The enzyme catalyses L-methionine + ATP + H2O = S-adenosyl-L-methionine + phosphate + diphosphate. It participates in amino-acid biosynthesis; S-adenosyl-L-methionine biosynthesis; S-adenosyl-L-methionine from L-methionine: step 1/1. In terms of biological role, catalyzes the formation of S-adenosylmethionine (AdoMet) from methionine and ATP. The overall synthetic reaction is composed of two sequential steps, AdoMet formation and the subsequent tripolyphosphate hydrolysis which occurs prior to release of AdoMet from the enzyme. This chain is S-adenosylmethionine synthase, found in Pasteurella multocida (strain Pm70).